The following is a 470-amino-acid chain: Cell division protein FtsP (470 aa).

Residues 1–27 (MSFSRRQFLQASGIALCAGAIPLRANA) constitute a signal peptide (tat-type signal). Positions 222 to 287 (VEVSRGWVRL…RREILVDMTN (66 aa)) constitute a Plastocyanin-like domain.

The protein belongs to the FtsP family. In terms of processing, predicted to be exported by the Tat system. The position of the signal peptide cleavage has not been experimentally proven.

It is found in the periplasm. Functionally, cell division protein that is required for growth during stress conditions. May be involved in protecting or stabilizing the divisomal assembly under conditions of stress. This chain is Cell division protein FtsP, found in Salmonella typhi.